We begin with the raw amino-acid sequence, 297 residues long: Cell death peptidase (297 aa).

Transmembrane regions (helical) follow at residues isoleucine 61–threonine 82 and isoleucine 149–threonine 178.

This sequence belongs to the peptidase U49 family.

The protein resides in the cell membrane. Its function is as follows. Interacts with a short DNA sequence about one-quarter of the way into the major capsid protein gene 23 of T4; general translation inhibition occurs when this late gene of the virus is expressed. In Escherichia coli (strain K12), this protein is Cell death peptidase (lit).